The primary structure comprises 62 residues: Toxin Ct28 (62 aa).

A signal peptide spans 1–22; it reads MKAFYGILIILLFCSMFKLNES. Intrachain disulfides connect Cys29–Cys51, Cys35–Cys56, and Cys39–Cys58. Asparagine amide is present on Asn61.

It belongs to the short scorpion toxin superfamily. Potassium channel inhibitor family. Alpha-KTx 02 subfamily. Expressed by the venom gland.

Its subcellular location is the secreted. Its function is as follows. Blocks voltage-gated potassium channels. The sequence is that of Toxin Ct28 from Centruroides tecomanus (Scorpion).